A 493-amino-acid chain; its full sequence is Glutamate--tRNA ligase (493 aa).

The 'HIGH' region signature appears at 10 to 20 (PSPTGDPHVGT). The short motif at 251–255 (KLSKR) is the 'KMSKS' region element. Lys-254 contributes to the ATP binding site.

Belongs to the class-I aminoacyl-tRNA synthetase family. Glutamate--tRNA ligase type 1 subfamily. In terms of assembly, monomer.

Its subcellular location is the cytoplasm. The enzyme catalyses tRNA(Glu) + L-glutamate + ATP = L-glutamyl-tRNA(Glu) + AMP + diphosphate. Its function is as follows. Catalyzes the attachment of glutamate to tRNA(Glu) in a two-step reaction: glutamate is first activated by ATP to form Glu-AMP and then transferred to the acceptor end of tRNA(Glu). This Pseudomonas putida (strain ATCC 700007 / DSM 6899 / JCM 31910 / BCRC 17059 / LMG 24140 / F1) protein is Glutamate--tRNA ligase.